The primary structure comprises 432 residues: Fibrinogen gamma chain (432 aa).

Residues 1 to 24 (MGRIGTPVFLAFLSALTCSLQVHA) form the signal peptide. A Fibrinogen C-terminal domain is found at 169 to 412 (KISPITGKDC…MTTMKLLPMG (244 aa)). Cys178 and Cys207 are oxidised to a cystine. Residue Asn227 is glycosylated (N-linked (GlcNAc...) asparagine). Ca(2+)-binding residues include Asp340, Asp342, Tyr344, and Gly346. Cysteines 348 and 361 form a disulfide. The tract at residues 413–432 (RDLSGHGGQQQSKGNSRGDN) is disordered. A compositionally biased stretch (polar residues) spans 421–432 (QQQSKGNSRGDN).

In terms of assembly, heterohexamer; disulfide linked. Contains 2 sets of 3 non-identical chains (alpha, beta and gamma). The 2 heterotrimers are in head to head conformation with the N-termini in a small central domain. Post-translationally, conversion of fibrinogen to fibrin is triggered by thrombin, which cleaves fibrinopeptides A and B from alpha and beta chains, and thus exposes the N-terminal polymerization sites responsible for the formation of the soft clot. The soft clot is converted into the hard clot by factor XIIIA which catalyzes the epsilon-(gamma-glutamyl)lysine cross-linking between gamma chains (stronger) and between alpha chains (weaker) of different monomers.

It is found in the secreted. Its function is as follows. Together with fibrinogen alpha (FGA) and fibrinogen beta (FGB), polymerizes to form an insoluble fibrin matrix. Has a major function in hemostasis as one of the primary components of blood clots. The polypeptide is Fibrinogen gamma chain (FGG) (Petromyzon marinus (Sea lamprey)).